We begin with the raw amino-acid sequence, 827 residues long: Beta-galactosidase 1 (827 aa).

Residues 1–25 (MMGRRGSSWCRWWVALLVLAVAADA) form the signal peptide. Glu187 serves as the catalytic Proton donor. Asn198 and Asn249 each carry an N-linked (GlcNAc...) asparagine glycan. The active-site Nucleophile is Glu259. N-linked (GlcNAc...) asparagine glycans are attached at residues Asn260, Asn366, Asn392, Asn502, Asn520, Asn578, Asn586, and Asn615. In terms of domain architecture, SUEL-type lectin spans 746–827 (GEAGDAVTLS…SGVLTVQATC (82 aa)).

This sequence belongs to the glycosyl hydrolase 35 family.

The protein resides in the secreted. It is found in the extracellular space. The protein localises to the apoplast. The enzyme catalyses Hydrolysis of terminal non-reducing beta-D-galactose residues in beta-D-galactosides.. The chain is Beta-galactosidase 1 from Oryza sativa subsp. japonica (Rice).